A 324-amino-acid chain; its full sequence is Ribose 1,5-bisphosphate isomerase (324 aa).

Substrate contacts are provided by residues 22–25 (RGAG) and Arg-65. Cys-135 serves as the catalytic Proton acceptor. Residue 137-139 (SKA) participates in substrate binding. Asp-204 functions as the Proton donor in the catalytic mechanism. Lys-240 is a binding site for substrate.

This sequence belongs to the eIF-2B alpha/beta/delta subunits family. R15P isomerase subfamily.

The catalysed reaction is alpha-D-ribose 1,5-bisphosphate = D-ribulose 1,5-bisphosphate. Catalyzes the isomerization of ribose 1,5-bisphosphate (R15P) to ribulose 1,5-bisphosphate (RuBP), the CO(2) acceptor and substrate for RubisCO. Functions in an archaeal AMP degradation pathway, together with AMP phosphorylase and RubisCO. This is Ribose 1,5-bisphosphate isomerase from Pyrococcus furiosus (strain ATCC 43587 / DSM 3638 / JCM 8422 / Vc1).